The chain runs to 87 residues: Protein Isd11 (87 aa).

Belongs to the complex I LYR family. As to quaternary structure, interacts with IscS; the interaction enhances cysteine desulfurase activity of IscS. Component of a complex, at least composed of IscS, Isd11 and IscU.

The protein resides in the mitochondrion. It participates in cofactor biosynthesis; iron-sulfur cluster biosynthesis. In terms of biological role, participates in iron-sulfur cluster formation (ISC) pathway for iron-sulfur (Fe-S) cluster biogenesis. Enhances cysteine desulfurase activity of IscS. The polypeptide is Protein Isd11 (Plasmodium falciparum (isolate 3D7)).